Here is a 122-residue protein sequence, read N- to C-terminus: Large ribosomal subunit protein uL14 (122 aa).

It belongs to the universal ribosomal protein uL14 family. As to quaternary structure, part of the 50S ribosomal subunit. Forms a cluster with proteins L3 and L19. In the 70S ribosome, L14 and L19 interact and together make contacts with the 16S rRNA in bridges B5 and B8.

Its function is as follows. Binds to 23S rRNA. Forms part of two intersubunit bridges in the 70S ribosome. This is Large ribosomal subunit protein uL14 from Agathobacter rectalis (strain ATCC 33656 / DSM 3377 / JCM 17463 / KCTC 5835 / VPI 0990) (Eubacterium rectale).